The sequence spans 228 residues: E3 ubiquitin-protein ligase RNF114 (228 aa).

The segment at 29 to 68 adopts an RING-type zinc-finger fold; sequence CPVCLEVYEKPVQVPCGHVFCSACLQECLKPKKPVCGVCR. Zn(2+) contacts are provided by Cys-91 and Cys-94. The C2HC RNF-type zinc-finger motif lies at 91-110; the sequence is CHGCRKNFFLSKIRAHVATC. Lys-102 carries the post-translational modification N6-acetyllysine. The Zn(2+) site is built by His-106 and Cys-110. Lys-112 bears the N6-acetyllysine mark.

Interacts with XAF1, the interaction increases XAF1 stability and proapoptotic effects, and may regulate IFN signaling. In terms of processing, autoubiquitinated. Polyubiquitinated in the presence of E2 enzymes UBE2D1, UBE2D2 and UBE2D3, but only monoubiquitinated in the presence of UBE2E1.

The protein localises to the cytoplasm. It is found in the nucleus. The enzyme catalyses S-ubiquitinyl-[E2 ubiquitin-conjugating enzyme]-L-cysteine + [acceptor protein]-L-lysine = [E2 ubiquitin-conjugating enzyme]-L-cysteine + N(6)-ubiquitinyl-[acceptor protein]-L-lysine.. It functions in the pathway protein modification; protein ubiquitination. In terms of biological role, E3 ubiquitin-protein ligase that promotes the ubiquitination of various substrates. In turn, participates in the regulation of many biological processes including cell cycle, apoptosis, osteoclastogenesis as well as innate or adaptive immunity. Acts as negative regulator of NF-kappa-B-dependent transcription by promoting the ubiquitination and stabilization of the NF-kappa-B inhibitor TNFAIP3. May promote the ubiquitination of TRAF6 as well. Also acts as a negative regulator of T-cell activation. Inhibits cellular dsRNA responses and interferon production by targeting MAVS component for proteasomal degradation. Ubiquitinates the CDK inhibitor CDKN1A leading to its degradationand probably also CDKN1B and CDKN1C. This activity stimulates cell cycle G1-to-S phase transition and suppresses cellular senescence. May play a role in spermatogenesis. Inhibits classical swine fever virus replication by mediating 'K27'-linked ubiquitination of viral NS4B and inducing its degradation via the proteasome. The protein is E3 ubiquitin-protein ligase RNF114 (RNF114) of Sus scrofa (Pig).